The primary structure comprises 206 residues: 3-demethoxyubiquinol 3-hydroxylase (206 aa).

Residues Glu55, Glu85, His88, Glu137, Glu169, and His172 each coordinate Fe cation.

The protein belongs to the COQ7 family. Fe cation is required as a cofactor.

The protein resides in the cell membrane. It carries out the reaction a 5-methoxy-2-methyl-3-(all-trans-polyprenyl)benzene-1,4-diol + AH2 + O2 = a 3-demethylubiquinol + A + H2O. It functions in the pathway cofactor biosynthesis; ubiquinone biosynthesis. In terms of biological role, catalyzes the hydroxylation of 2-nonaprenyl-3-methyl-6-methoxy-1,4-benzoquinol during ubiquinone biosynthesis. The polypeptide is 3-demethoxyubiquinol 3-hydroxylase (Chromobacterium violaceum (strain ATCC 12472 / DSM 30191 / JCM 1249 / CCUG 213 / NBRC 12614 / NCIMB 9131 / NCTC 9757 / MK)).